Consider the following 1201-residue polypeptide: Period circadian protein homolog 3 (1201 aa).

Positions 1 to 50 (MPRGEAPGPGRRGAKDEALGEESGERWSPEFHLQRKLADSSHSEQQDRNR) are disordered. Basic and acidic residues predominate over residues 13 to 50 (GAKDEALGEESGERWSPEFHLQRKLADSSHSEQQDRNR). The Nuclear export signal 1 signature appears at 55–64 (LIMVVQEMKK). 2 PAS domains span residues 121 to 188 (IASE…RAQL) and 262 to 328 (YEAP…KVLK). Residues 337-380 (HSPIRFCTQNGDYIILDSSWSSFVNPWSRKISFIIGRHKVRTSP) enclose the PAC domain. Residues 403–412 (LQEQIYKLLL) carry the Nuclear export signal 3 motif. The CSNK1E binding domain stretch occupies residues 555-760 (LKRKCISCTN…SSSNTGSGPR (206 aa)). 2 disordered regions span residues 717–788 (YSYF…FPPA) and 881–923 (PSMS…RSSS). Residues 721-731 (QGDSTSKQTRS) show a composition bias toward polar residues. The Nuclear localization signal motif lies at 729-745 (TRSAGCRKGKHKRKKLP). Basic residues predominate over residues 733–743 (GCRKGKHKRKK). Composition is skewed to low complexity over residues 767–783 (AQPCCPSAASSPHTSSP) and 881–890 (PSMSSAMSPT). Over residues 900–911 (QRREEEKWEAQS) the composition is skewed to basic and acidic residues. A Phosphoserine modification is found at Ser-919. The Nuclear export signal 2 signature appears at 925 to 932 (LQLNLLQE). The tract at residues 952 to 1067 (TEYCVTGNNG…GSAASGSSDS (116 aa)) is disordered. 4 stretches are compositionally biased toward polar residues: residues 957 to 976 (TGNNGSESSPATTGALSTGS), 983 to 994 (SHPTASALSTGS), 1001 to 1012 (SHPTASALSTGS), and 1035 to 1050 (TPSHPTATVLSTGSPP). A run of 5 repeats spans residues 965–982 (SPATTGALSTGSPPRENP), 983–1000 (SHPTASALSTGSPPMKNP), 1001–1018 (SHPTASALSTGSPPMKNP), 1019–1036 (SHPTASTLSMGLPPSRTP), and 1037–1054 (SHPTATVLSTGSPPSESP). The tract at residues 965–1054 (SPATTGALST…STGSPPSESP (90 aa)) is 5 X 18 AA tandem repeats of S-[HP]-[AP]-T-[AT]-[GST]-[ATV]-L-S-[MT]-G-[LS]-P-P-[MRS]-[EKR]-[NST]-P. At Ser-994 the chain carries Phosphoserine. A Phosphoserine modification is found at Ser-1053. Positions 1053 to 1067 (SPSRTGSAASGSSDS) are enriched in low complexity. The CRY binding domain stretch occupies residues 1123-1201 (ERVKEVVLKE…CGQVLVEDSC (79 aa)).

In terms of assembly, homodimer. Component of the circadian core oscillator, which includes the CRY proteins, CLOCK or NPAS2, BMAL1 or BMAL2, CSNK1D and/or CSNK1E, TIMELESS and the PER proteins. Interacts directly with PER1, PER2, CRY1, CRY2, and TIMELESS; interaction with CRY1 and CRY2 is weak and not rhythmic. Interacts with FBXW11 and BTRC. Post-translationally, phosphorylation by CSNK1E is weak and appears to require association with PER1 and translocation to the nucleus. In terms of processing, ubiquitinated.

Its subcellular location is the cytoplasm. It is found in the nucleus. In terms of biological role, originally described as a core component of the circadian clock. The circadian clock, an internal time-keeping system, regulates various physiological processes through the generation of approximately 24 hour circadian rhythms in gene expression, which are translated into rhythms in metabolism and behavior. It is derived from the Latin roots 'circa' (about) and 'diem' (day) and acts as an important regulator of a wide array of physiological functions including metabolism, sleep, body temperature, blood pressure, endocrine, immune, cardiovascular, and renal function. Consists of two major components: the central clock, residing in the suprachiasmatic nucleus (SCN) of the brain, and the peripheral clocks that are present in nearly every tissue and organ system. Both the central and peripheral clocks can be reset by environmental cues, also known as Zeitgebers (German for 'timegivers'). The predominant Zeitgeber for the central clock is light, which is sensed by retina and signals directly to the SCN. The central clock entrains the peripheral clocks through neuronal and hormonal signals, body temperature and feeding-related cues, aligning all clocks with the external light/dark cycle. Circadian rhythms allow an organism to achieve temporal homeostasis with its environment at the molecular level by regulating gene expression to create a peak of protein expression once every 24 hours to control when a particular physiological process is most active with respect to the solar day. Transcription and translation of core clock components (CLOCK, NPAS2, BMAL1, BMAL2, PER1, PER2, PER3, CRY1 and CRY2) plays a critical role in rhythm generation, whereas delays imposed by post-translational modifications (PTMs) are important for determining the period (tau) of the rhythms (tau refers to the period of a rhythm and is the length, in time, of one complete cycle). A diurnal rhythm is synchronized with the day/night cycle, while the ultradian and infradian rhythms have a period shorter and longer than 24 hours, respectively. Disruptions in the circadian rhythms contribute to the pathology of cardiovascular diseases, cancer, metabolic syndromes and aging. A transcription/translation feedback loop (TTFL) forms the core of the molecular circadian clock mechanism. Transcription factors, CLOCK or NPAS2 and BMAL1 or BMAL2, form the positive limb of the feedback loop, act in the form of a heterodimer and activate the transcription of core clock genes and clock-controlled genes (involved in key metabolic processes), harboring E-box elements (5'-CACGTG-3') within their promoters. The core clock genes: PER1/2/3 and CRY1/2 which are transcriptional repressors form the negative limb of the feedback loop and interact with the CLOCK|NPAS2-BMAL1|BMAL2 heterodimer inhibiting its activity and thereby negatively regulating their own expression. This heterodimer also activates nuclear receptors NR1D1, NR1D2, RORA, RORB and RORG, which form a second feedback loop and which activate and repress BMAL1 transcription, respectively. Has a redundant role with the other PER proteins PER1 and PER2 and is not essential for the circadian rhythms maintenance. In contrast, plays an important role in sleep-wake timing and sleep homeostasis probably through the transcriptional regulation of sleep homeostasis-related genes, without influencing circadian parameters. Can bind heme. In Homo sapiens (Human), this protein is Period circadian protein homolog 3 (PER3).